A 361-amino-acid chain; its full sequence is Phospho-N-acetylmuramoyl-pentapeptide-transferase (361 aa).

Helical transmembrane passes span 21 to 41 (YLTI…LMLG), 69 to 89 (VGTP…SILI), 93 to 113 (WSNI…AIGF), 131 to 151 (SIKF…IILI), 168 to 188 (IILP…IVGS), 200 to 220 (GLAI…AYFS), 240 to 260 (LFII…FNAY), 264 to 284 (IFMG…IAIL), 289 to 309 (ILLF…IIQV), and 338 to 358 (KIIV…LASI).

Belongs to the glycosyltransferase 4 family. MraY subfamily. Mg(2+) is required as a cofactor.

It is found in the cell inner membrane. It carries out the reaction UDP-N-acetyl-alpha-D-muramoyl-L-alanyl-gamma-D-glutamyl-meso-2,6-diaminopimeloyl-D-alanyl-D-alanine + di-trans,octa-cis-undecaprenyl phosphate = di-trans,octa-cis-undecaprenyl diphospho-N-acetyl-alpha-D-muramoyl-L-alanyl-D-glutamyl-meso-2,6-diaminopimeloyl-D-alanyl-D-alanine + UMP. It functions in the pathway cell wall biogenesis; peptidoglycan biosynthesis. Catalyzes the initial step of the lipid cycle reactions in the biosynthesis of the cell wall peptidoglycan: transfers peptidoglycan precursor phospho-MurNAc-pentapeptide from UDP-MurNAc-pentapeptide onto the lipid carrier undecaprenyl phosphate, yielding undecaprenyl-pyrophosphoryl-MurNAc-pentapeptide, known as lipid I. The sequence is that of Phospho-N-acetylmuramoyl-pentapeptide-transferase from Vesicomyosocius okutanii subsp. Calyptogena okutanii (strain HA).